The following is a 342-amino-acid chain: GTP 3',8-cyclase (342 aa).

Positions 18-247 (GFSRRFYYLR…QLRGADDGPA (230 aa)) constitute a Radical SAM core domain. Arginine 27 lines the GTP pocket. Positions 34 and 38 each coordinate [4Fe-4S] cluster. Residue tyrosine 40 coordinates S-adenosyl-L-methionine. Residue cysteine 41 coordinates [4Fe-4S] cluster. Position 81 (arginine 81) interacts with GTP. Residue glycine 85 coordinates S-adenosyl-L-methionine. GTP is bound at residue threonine 112. Serine 136 serves as a coordination point for S-adenosyl-L-methionine. Lysine 173 provides a ligand contact to GTP. Residue methionine 207 participates in S-adenosyl-L-methionine binding. [4Fe-4S] cluster contacts are provided by cysteine 270 and cysteine 273. 275–277 (RLR) contacts GTP. Residue cysteine 287 coordinates [4Fe-4S] cluster.

The protein belongs to the radical SAM superfamily. MoaA family. As to quaternary structure, monomer and homodimer. [4Fe-4S] cluster serves as cofactor.

It carries out the reaction GTP + AH2 + S-adenosyl-L-methionine = (8S)-3',8-cyclo-7,8-dihydroguanosine 5'-triphosphate + 5'-deoxyadenosine + L-methionine + A + H(+). The protein operates within cofactor biosynthesis; molybdopterin biosynthesis. Catalyzes the cyclization of GTP to (8S)-3',8-cyclo-7,8-dihydroguanosine 5'-triphosphate. This Aeromonas hydrophila subsp. hydrophila (strain ATCC 7966 / DSM 30187 / BCRC 13018 / CCUG 14551 / JCM 1027 / KCTC 2358 / NCIMB 9240 / NCTC 8049) protein is GTP 3',8-cyclase.